A 274-amino-acid chain; its full sequence is Nitrogenase iron protein (274 aa).

8–15 lines the ATP pocket; it reads GKGGIGKS. Residue Cys-94 coordinates [4Fe-4S] cluster. Arg-97 bears the ADP-ribosylarginine; by dinitrogenase reductase ADP-ribosyltransferase mark. [4Fe-4S] cluster is bound at residue Cys-131.

This sequence belongs to the NifH/BchL/ChlL family. As to quaternary structure, homodimer. [4Fe-4S] cluster serves as cofactor. In terms of processing, the reversible ADP-ribosylation of Arg-97 inactivates the nitrogenase reductase and regulates nitrogenase activity.

The enzyme catalyses N2 + 8 reduced [2Fe-2S]-[ferredoxin] + 16 ATP + 16 H2O = H2 + 8 oxidized [2Fe-2S]-[ferredoxin] + 2 NH4(+) + 16 ADP + 16 phosphate + 6 H(+). The key enzymatic reactions in nitrogen fixation are catalyzed by the nitrogenase complex, which has 2 components: the iron protein and the molybdenum-iron protein. This Chlorobium chlorochromatii (strain CaD3) protein is Nitrogenase iron protein.